The following is a 207-amino-acid chain: Ras-related protein Rab-5B (207 aa).

The N-myristoyl glycine moiety is linked to residue Gly2. GTP is bound by residues 41 to 49 (GDSGVGKSS), 60 to 66 (SEKHQVT), 90 to 94 (DTGGQ), 148 to 151 (NKKD), and 176 to 178 (SAK). An Effector region motif is present at residues 63 to 71 (HQVTIGAAF).

This sequence belongs to the small GTPase superfamily. Rab family. Interacts with CK1. May interact with ARF1. Myristoylation is required for cell membrane and food vacuole membrane localization. Post-translationally, may be palmitoylated on Cys-3. In terms of processing, lacks the C-terminal cysteine motifs subject to isoprenylation present in mammalian RAB5B homolog.

It is found in the cell membrane. It localises to the vacuole membrane. The protein resides in the vesicle. It catalyses the reaction GTP + H2O = GDP + phosphate + H(+). With respect to regulation, alternates between an inactive GDP-bound form and an active GTP-bound form. Activated by guanine nucleotide-exchange factors (GEFs) and inactivated by GTPase-activating proteins (GAPs). Functionally, small GTPase which regulates vesicle trafficking between organelles. May be involved in the trafficking of the N-myristoylated AK2 from the endoplasmic reticulum to the parasitophorous vacuole membrane. The protein is Ras-related protein Rab-5B of Plasmodium falciparum (isolate 3D7).